A 468-amino-acid chain; its full sequence is Asparagine--tRNA ligase (468 aa).

This sequence belongs to the class-II aminoacyl-tRNA synthetase family. In terms of assembly, homodimer.

The protein localises to the cytoplasm. It catalyses the reaction tRNA(Asn) + L-asparagine + ATP = L-asparaginyl-tRNA(Asn) + AMP + diphosphate + H(+). The protein is Asparagine--tRNA ligase of Parabacteroides distasonis (strain ATCC 8503 / DSM 20701 / CIP 104284 / JCM 5825 / NCTC 11152).